A 1509-amino-acid chain; its full sequence is DNA polymerase alpha catalytic subunit (1509 aa).

The disordered stretch occupies residues 1-162 (MNRPKREKKS…KKTKEKKNEI (162 aa)). Composition is skewed to basic and acidic residues over residues 21 to 35 (EQIK…RTDQ) and 42 to 79 (ERKR…RETS). Positions 27–67 (RDGEKRTDQLQEEDDERKRLEQLKEQETEFDKEERKRKNRD) form a coiled coil. Positions 80–123 (DNEDEDEDEDDDGDNSDDDYSLDEDDEDGGGDGENNDSDQEEAI) are enriched in acidic residues. Positions 127–137 (RKKKRQVKKKS) are enriched in basic residues. Residues 138-147 (KKDENGEPKV) are compositionally biased toward basic and acidic residues. The segment covering 148-157 (KTPRVKKTKE) has biased composition (basic residues). 2 coiled-coil regions span residues 234 to 263 (APDS…LLNK) and 958 to 989 (LHGL…IQQQ). Residues C1328, C1331, C1355, C1358, C1389, C1392, C1406, and C1411 each contribute to the Zn(2+) site. A CysA-type zinc finger spans residues 1328–1358 (CPYCGQNNEFTGIVKIDSEGKSESGFDCNQC). The short motif at 1389–1411 (CTECEKVSKNYKETSYRCARPQC) is the CysB motif element.

This sequence belongs to the DNA polymerase type-B family.

Its subcellular location is the nucleus. It carries out the reaction DNA(n) + a 2'-deoxyribonucleoside 5'-triphosphate = DNA(n+1) + diphosphate. In terms of biological role, polymerase alpha in a complex with DNA primase is a replicative polymerase. The polypeptide is DNA polymerase alpha catalytic subunit (pola1) (Dictyostelium discoideum (Social amoeba)).